Reading from the N-terminus, the 389-residue chain is MMNKLSKMEFAAQDKAVDLDALCQEIRERACAGEFDNQAYVSQDIIEKLKKIGVYRALVPKRFGGEEWSPRQFCELIETLSKADGSVGWVASFGMSPAYLGSLPEETLKELYQNGPDVVFAGGIFPPQPAEITDEGVVVRGRWKFSSGCMGADIVGVGISPLKNNEMQGLPRMAVMPANKAKIEMTWDTVGLKGTGSHDLVVEDVLVEKKWTFVRGEPSKLSEPFFKYPSLSLATQVLTVVGIGVAAAALEEFEKLAPGKASITGGSEIANRPVTQYEFAQADAEFQAAKSWFYQTMDIVWNEIIAGREATAEQISDMRLACTHAARVCAKVTRKMQMLAGMTAIYTNNPFSRFVNDTNVVTQHAFMGDATLQNAGLVSFGLKPAPGYL.

Belongs to the HpaH/HsaA monooxygenase family.

The catalysed reaction is (indol-3-yl)acetate + NADH + O2 + H(+) = 2-hydroxy-(1H-indol-3-yl)acetate + NAD(+) + H2O. It catalyses the reaction indole + NADH + O2 + H(+) = indoxyl + NAD(+) + H2O. Its function is as follows. Involved in the degradation of the plant hormone indole-3-acetic acid (IAA). Catalyzes the first step of the pathway, the conversion of IAA to 2-hydroxy-IAA (2-OH-IAA). Can also convert indole to indoxyl, which spontaneously dimerizes in the presence of oxygen to form the blue pigment indigo. The chain is Indole-3-acetate monooxygenase from Acinetobacter baumannii (strain ATCC 19606 / DSM 30007 / JCM 6841 / CCUG 19606 / CIP 70.34 / NBRC 109757 / NCIMB 12457 / NCTC 12156 / 81).